Here is a 94-residue protein sequence, read N- to C-terminus: Co-chaperonin GroES (94 aa).

It belongs to the GroES chaperonin family. In terms of assembly, heptamer of 7 subunits arranged in a ring. Interacts with the chaperonin GroEL.

It localises to the cytoplasm. Together with the chaperonin GroEL, plays an essential role in assisting protein folding. The GroEL-GroES system forms a nano-cage that allows encapsulation of the non-native substrate proteins and provides a physical environment optimized to promote and accelerate protein folding. GroES binds to the apical surface of the GroEL ring, thereby capping the opening of the GroEL channel. The protein is Co-chaperonin GroES of Alkaliphilus metalliredigens (strain QYMF).